Reading from the N-terminus, the 682-residue chain is MSRKQLALFEPTLVVQALKEAVKKLNPQAQWRNPVMFIVWIGSLLTTCISIAMASGVMPGNALFSAAISGWLWVTVLFANFAEALAEGRSKAQANSLKGVKKTAFARKLREPKYGAAADKVPADQLRKGDIVLVEAGDIIPCDGEVIEGGASVDESAITGESAPVIRESGGDFASVTGGTRILSDWLVIECSVNPGETFLDRMIAMVEGAQRRKTPNEIALTILLIALTIVFLLATATLWPFSAWGGNAVSVTVLVALLVCLIPTTIGGLLSAIGVAGMSRMLGANVIATSGRAVEAAGDVDVLLLDKTGTITLGNRQASEFIPAQGVEEKALADAAQLASLADETPEGRSIVILAKQRFNLRERDVQSLHATFVPFTAQSRMSGINIDNRMIRKGSVDAIRRHVEANGGHFPADVDQKVDQVARQGATPLVVVEGSRVLGVIALKDIVKGGIKERFAQLRKMGIKTVMITGDNRLTAAAIAAEAGVDDFLAEATPEAKLALIRQYQAEGRLVAMTGDGTNDAPALAQADVAVAMNSGTQAAKEAGNMVDLDSNPTKLIEVVHIGKQMLMTRGSLTTFSIANDVAKYFAIIPAAFAATYPQLNALNIMRLHSPDSAILSAVIFNALIIVFLIPLALKGVSYKPLTASAMLRRNLWIYGLGGLLVPFIGIKVIDLLLTVCGLV.

Helical transmembrane passes span 34–54, 62–82, 219–239, and 254–274; these read PVMF…IAMA, ALFS…ANFA, IALT…TATL, and VLVA…LSAI. Residue D307 is the 4-aspartylphosphate intermediate of the active site. Residues D344, E348, 377 to 384, and K395 each bind ATP; that span reads FTAQSRMS. Mg(2+)-binding residues include D518 and D522. The next 3 helical transmembrane spans lie at 588–608, 616–636, and 656–676; these read FAII…LNIM, AILS…PLAL, and IYGL…DLLL.

Belongs to the cation transport ATPase (P-type) (TC 3.A.3) family. Type IA subfamily. The system is composed of three essential subunits: KdpA, KdpB and KdpC.

It is found in the cell inner membrane. It carries out the reaction K(+)(out) + ATP + H2O = K(+)(in) + ADP + phosphate + H(+). Functionally, part of the high-affinity ATP-driven potassium transport (or Kdp) system, which catalyzes the hydrolysis of ATP coupled with the electrogenic transport of potassium into the cytoplasm. This subunit is responsible for energy coupling to the transport system and for the release of the potassium ions to the cytoplasm. The chain is Potassium-transporting ATPase ATP-binding subunit from Escherichia coli O6:K15:H31 (strain 536 / UPEC).